We begin with the raw amino-acid sequence, 223 residues long: 2-phospho-L-lactate guanylyltransferase (223 aa).

The protein belongs to the CofC family. As to quaternary structure, homodimer.

The catalysed reaction is (2S)-2-phospholactate + GTP + H(+) = (2S)-lactyl-2-diphospho-5'-guanosine + diphosphate. It functions in the pathway cofactor biosynthesis; coenzyme F420 biosynthesis. In terms of biological role, guanylyltransferase that catalyzes the activation of (2S)-2-phospholactate (2-PL) as (2S)-lactyl-2-diphospho-5'-guanosine, via the condensation of 2-PL with GTP. It is involved in the biosynthesis of coenzyme F420, a hydride carrier cofactor. This chain is 2-phospho-L-lactate guanylyltransferase, found in Methanothermobacter thermautotrophicus (strain ATCC 29096 / DSM 1053 / JCM 10044 / NBRC 100330 / Delta H) (Methanobacterium thermoautotrophicum).